Consider the following 462-residue polypeptide: Cysteine--tRNA ligase (462 aa).

Residue cysteine 24 participates in Zn(2+) binding. A 'HIGH' region motif is present at residues 26-36 (PTVYDDAHLGH). Residues cysteine 199, histidine 224, and glutamate 228 each coordinate Zn(2+). A 'KMSKS' region motif is present at residues 256 to 260 (KMSKS). Residue lysine 259 participates in ATP binding.

Belongs to the class-I aminoacyl-tRNA synthetase family. Monomer. It depends on Zn(2+) as a cofactor.

Its subcellular location is the cytoplasm. The catalysed reaction is tRNA(Cys) + L-cysteine + ATP = L-cysteinyl-tRNA(Cys) + AMP + diphosphate. The protein is Cysteine--tRNA ligase of Campylobacter jejuni subsp. doylei (strain ATCC BAA-1458 / RM4099 / 269.97).